We begin with the raw amino-acid sequence, 234 residues long: Probable chemoreceptor glutamine deamidase CheD (234 aa).

It belongs to the CheD family.

The catalysed reaction is L-glutaminyl-[protein] + H2O = L-glutamyl-[protein] + NH4(+). Functionally, probably deamidates glutamine residues to glutamate on methyl-accepting chemotaxis receptors (MCPs), playing an important role in chemotaxis. This chain is Probable chemoreceptor glutamine deamidase CheD, found in Burkholderia mallei (strain NCTC 10247).